Here is a 414-residue protein sequence, read N- to C-terminus: Glyceraldehyde-3-phosphate dehydrogenase, chloroplastic (414 aa).

A chloroplast-targeting transit peptide spans 1–76 (MAFVAPVATV…GIVAATFGPT (76 aa)). Residues 88-89 (RI), Asp-112, and Arg-156 each bind NADP(+). Residues 230–232 (SCT), Thr-261, Arg-276, 289–290 (TG), and Arg-312 contribute to the D-glyceraldehyde 3-phosphate site. Cys-231 acts as the Nucleophile in catalysis. Asn-394 provides a ligand contact to NADP(+).

This sequence belongs to the glyceraldehyde-3-phosphate dehydrogenase family. Homotetramer.

Its subcellular location is the plastid. It localises to the chloroplast. It catalyses the reaction D-glyceraldehyde 3-phosphate + phosphate + NADP(+) = (2R)-3-phospho-glyceroyl phosphate + NADPH + H(+). Its pathway is carbohydrate biosynthesis; Calvin cycle. This chain is Glyceraldehyde-3-phosphate dehydrogenase, chloroplastic (GAPA), found in Chondrus crispus (Carrageen Irish moss).